Consider the following 87-residue polypeptide: Small ribosomal subunit protein uS17 (87 aa).

The protein belongs to the universal ribosomal protein uS17 family. Part of the 30S ribosomal subunit.

One of the primary rRNA binding proteins, it binds specifically to the 5'-end of 16S ribosomal RNA. The polypeptide is Small ribosomal subunit protein uS17 (Exiguobacterium sibiricum (strain DSM 17290 / CCUG 55495 / CIP 109462 / JCM 13490 / 255-15)).